A 401-amino-acid polypeptide reads, in one-letter code: Type 3 secretion system translocon protein SctE (401 aa).

A coiled-coil region spans residues 129–160 (IQRLHEQNMKKIEENQEKIKETEENAKQVKKS). 2 helical membrane-spanning segments follow: residues 166–186 (IFGW…VASG) and 225–245 (LGPI…VMTF). Residues 345 to 379 (LALNKADMAALQSIIDRLKEELSHLSESHRQVMEL) adopt a coiled-coil conformation.

It belongs to the SctE/SipB/YopB family. The core secretion machinery of the T3SS is composed of approximately 20 different proteins, including cytoplasmic components, a base, an export apparatus and a needle. This subunit is involved in the formation of a pore, called the translocon, in host membrane. Interacts with YopD/SctB. Together with YopD/SctB, forms a multimeric integral membrane complex with a mass of between 500 and 700 kDa.

It is found in the secreted. Its subcellular location is the host membrane. Component of the type III secretion system (T3SS), also called injectisome, which is used to inject bacterial effector proteins into eukaryotic host cells. YopB/SctE and YopD/SctB are inserted into the host membrane where they form a pore and allow the translocation of effector proteins into the cytosol of target cells. Is an essential virulence determinant. Required for YopE translocation. Its function is as follows. Essential for the establishment of Yersinia infections in a mouse model system, but not for the targeting of effector Yops. May modulate the host's immune response at a distance from the site of infection. The polypeptide is Type 3 secretion system translocon protein SctE (Yersinia enterocolitica).